The primary structure comprises 271 residues: MIHSKRLKLCLCLIILSVFIGACGMKKEESSKDKQIKENFNKILSLYPTKNLEDFYDKEGFRDEEFEKGDKGTWIIHSKMIIETNNSNMESRGMVLYINRNTRTTKGNFVVREITEDSKGYSHSKDTKYPVKMEHNRIIPTKPIADDKLRKEIENFKFFVQYGDFKDINDYKDGDISYNPNVPSYSAKYQLSNDDYNVKQLRKRYNIPTNKAPKLLLKGDGDLKGSSVGSKNLEFTFVENKEENIYFTDSVQYTPSEDTSYESNGISNKSW.

Residues 1-22 (MIHSKRLKLCLCLIILSVFIGA) form the signal peptide. Cys23 carries the N-palmitoyl cysteine lipid modification. Residue Cys23 is the site of S-diacylglycerol cysteine attachment.

This sequence belongs to the staphylococcal tandem lipoprotein family.

Its subcellular location is the cell membrane. This is an uncharacterized protein from Staphylococcus aureus (strain MW2).